The sequence spans 463 residues: MESGFNGSRPHRVKKDLPDRVNPVNTQGSSGTTGNAFRKNNNNKTQNWKPRSGPGNRNEGDQTKNNKSDLQQPSEVHPENQVRPESSTGESVKQQSEPHRVLEDKKQSGKTAGSSVRIPEEGGGGLGSANYLGKRQLDFVAKLCVESGFKSTGKPLKRYPAEFFKSSGLLEKFVKYLSSRLDKGCNLSQRESEVVLKNLRSKRAEQSFLAGAVTGVPGSGKTTLLRKVQCEGGFNSIVILGNPRSKTEFSNLPSCYTAKEILLLGIAIKCEVLLIDEYTLLTSGEILLLQKITNSRIVILFGDRAQGSSNTLCSPEWLQVPVIFQSLTSRRFGKATANLCRRQGFDFEGGEHEDKVVESPYEGSSPATDINIVFSESTREDLLECGIESTLVSDVQGKEYNTVTLFIPDEDREYLTNAHLRSVAFSRHKFALEIRCNPELFMQLINGELASKQQPQTDRYGPE.

A disordered region spans residues 1–126 (MESGFNGSRP…RIPEEGGGGL (126 aa)). 2 nucleolar localization signal regions span residues 11 to 16 (HRVKKD) and 37 to 52 (FRKN…KPRS). Positions 23–49 (PVNTQGSSGTTGNAFRKNNNNKTQNWK) are enriched in polar residues. A compositionally biased stretch (basic and acidic residues) spans 58–67 (NEGDQTKNNK). Residues 83 to 95 (RPESSTGESVKQQ) are compositionally biased toward polar residues. The span at 96–107 (SEPHRVLEDKKQ) shows a compositional bias: basic and acidic residues. The (+)RNA virus helicase ATP-binding domain maps to 185–326 (CNLSQRESEV…WLQVPVIFQS (142 aa)). ATP is bound at residue 215 to 222 (GVPGSGKT). The region spanning 327–463 (LTSRRFGKAT…QPQTDRYGPE (137 aa)) is the (+)RNA virus helicase C-terminal domain.

It belongs to the virgaviridae/benyvirus TGB1 movement protein family. In terms of assembly, homooligomer. TGB1-TGB3-TGB2 complex formation is enhanced by ATP hydrolysis. Interacts with the suppressor of RNA silencing (via N-terminus). Interacts (via N-terminus) with host importin IMPA1. Requires Mg(2+) as cofactor.

Its subcellular location is the host cell junction. It is found in the host plasmodesma. The protein localises to the host nucleus. It localises to the host cytoplasm. The protein resides in the host nucleolus. Its subcellular location is the host cytoskeleton. The catalysed reaction is ATP + H2O = ADP + phosphate + H(+). Participates in the transport of viral genome to neighboring plant cells directly through plasmodesmata, without any budding. Multifunctional movement protein with RNA-binding, ATPase and helicase activities. Engages in homologous interactions leading to the formation of a ribonucleoprotein complex containing plus-sense viral RNAs (vRNPs). ATPase activity is probably required for vRNPs movement complex assembly. Intracellular delivery of TGBp1-containing vRNPs to plasmodesmata is facilitated by TGBp2 and TGBp3. The chain is Movement protein TGB1 from Potato mop-top virus (isolate Potato/Sweden/Sw) (PMTV).